We begin with the raw amino-acid sequence, 85 residues long: ATP synthase subunit c (85 aa).

Transmembrane regions (helical) follow at residues 19–39 (LGAA…IGKI) and 62–82 (IIAA…CLLV).

Belongs to the ATPase C chain family. As to quaternary structure, F-type ATPases have 2 components, F(1) - the catalytic core - and F(0) - the membrane proton channel. F(1) has five subunits: alpha(3), beta(3), gamma(1), delta(1), epsilon(1). F(0) has three main subunits: a(1), b(2) and c(10-14). The alpha and beta chains form an alternating ring which encloses part of the gamma chain. F(1) is attached to F(0) by a central stalk formed by the gamma and epsilon chains, while a peripheral stalk is formed by the delta and b chains.

The protein localises to the cell inner membrane. In terms of biological role, f(1)F(0) ATP synthase produces ATP from ADP in the presence of a proton or sodium gradient. F-type ATPases consist of two structural domains, F(1) containing the extramembraneous catalytic core and F(0) containing the membrane proton channel, linked together by a central stalk and a peripheral stalk. During catalysis, ATP synthesis in the catalytic domain of F(1) is coupled via a rotary mechanism of the central stalk subunits to proton translocation. Its function is as follows. Key component of the F(0) channel; it plays a direct role in translocation across the membrane. A homomeric c-ring of between 10-14 subunits forms the central stalk rotor element with the F(1) delta and epsilon subunits. The chain is ATP synthase subunit c from Bacteroides fragilis (strain ATCC 25285 / DSM 2151 / CCUG 4856 / JCM 11019 / LMG 10263 / NCTC 9343 / Onslow / VPI 2553 / EN-2).